Consider the following 200-residue polypeptide: NAD(P)H dehydrogenase (quinone) (200 aa).

Residues V4 to V191 enclose the Flavodoxin-like domain. FMN contacts are provided by residues S10–V15 and T79–F81. NAD(+) is bound at residue Y12. W99 contributes to the substrate binding site. FMN-binding positions include S114–G120 and H135.

It belongs to the WrbA family. FMN is required as a cofactor.

The catalysed reaction is a quinone + NADH + H(+) = a quinol + NAD(+). It catalyses the reaction a quinone + NADPH + H(+) = a quinol + NADP(+). This is NAD(P)H dehydrogenase (quinone) from Burkholderia lata (strain ATCC 17760 / DSM 23089 / LMG 22485 / NCIMB 9086 / R18194 / 383).